A 101-amino-acid chain; its full sequence is Small ribosomal subunit protein uS14 (101 aa).

The tract at residues 36–72 (GTDESREAARAGIQRLPRDASPIRVRNRDGIDGRPRG) is disordered. Over residues 61-70 (RNRDGIDGRP) the composition is skewed to basic and acidic residues.

This sequence belongs to the universal ribosomal protein uS14 family. Part of the 30S ribosomal subunit. Contacts proteins S3 and S10.

In terms of biological role, binds 16S rRNA, required for the assembly of 30S particles and may also be responsible for determining the conformation of the 16S rRNA at the A site. The protein is Small ribosomal subunit protein uS14 of Clavibacter michiganensis subsp. michiganensis (strain NCPPB 382).